Here is a 440-residue protein sequence, read N- to C-terminus: Tuliposide B-converting enzyme 1, amyloplastic (440 aa).

Residues 1–58 (MSIVSFCSSLPAGPHGFKHGRGTRDMVHMPCIVRRTARSPAQACRLLRWNKYHCAAVP) constitute an amyloplast transit peptide. Catalysis depends on S232, which acts as the Acyl-ester intermediate. Residues D325 and H357 each act as charge relay system in the active site.

The protein belongs to the AB hydrolase superfamily. As to quaternary structure, homodimer. In terms of processing, not glycosylated. As to expression, expressed in the pollen grains.

Its subcellular location is the plastid. The protein localises to the amyloplast. The enzyme catalyses 6-tuliposide B = tulipalin B + D-glucose. Its activity is regulated as follows. Inhibited by Ag(+), Cu(2+), Fe(2+), Hg(2+), V(3+) and phenylmethylsulfonyl fluoride (PMSF). Functionally, lactone-forming carboxylesterase, specifically catalyzing intramolecular transesterification, but not hydrolysis. Involved in the biosynthesis of tulipalins, defensive chemicals that show antimicrobial activities against a broad range of strains of bacteria and fungi. Substrates are 6-tuliposide B &gt; 6-tuliposide A. The polypeptide is Tuliposide B-converting enzyme 1, amyloplastic (Tulipa gesneriana (Garden tulip)).